A 94-amino-acid polypeptide reads, in one-letter code: Large ribosomal subunit protein uL23 (94 aa).

The protein belongs to the universal ribosomal protein uL23 family. In terms of assembly, part of the 50S ribosomal subunit. Contacts protein L29, and trigger factor when it is bound to the ribosome.

One of the early assembly proteins it binds 23S rRNA. One of the proteins that surrounds the polypeptide exit tunnel on the outside of the ribosome. Forms the main docking site for trigger factor binding to the ribosome. The sequence is that of Large ribosomal subunit protein uL23 from Listeria innocua serovar 6a (strain ATCC BAA-680 / CLIP 11262).